The chain runs to 2200 residues: Tyrosine-protein phosphatase Lar-like (2200 aa).

An N-terminal signal peptide occupies residues 1 to 42; the sequence is MIQFRNKNNSMNRIARHLRNVARRKGSSLLLFLMLSTVLVAA. 2 N-linked (GlcNAc...) asparagine glycosylation sites follow: N8 and N116. Topologically, residues 43 to 1497 are extracellular; the sequence is KEDDPARLVV…LRGASQKSSP (1455 aa). Ig-like C2-type domains follow at residues 47-139, 151-240, and 250-334; these read PARL…ASLT, PQIE…KAAN, and PYFS…TTVI. 2 disulfide bridges follow: C69/C122 and C172/C225. N-linked (GlcNAc...) asparagine glycosylation is found at N269 and N315. C272 and C318 form a disulfide bridge. 9 consecutive Fibronectin type-III domains span residues 341 to 434, 439 to 535, 539 to 628, 633 to 748, 752 to 856, 857 to 956, 957 to 1053, 1058 to 1158, and 1181 to 1287; these read PPVN…TKPS, APVS…TRQG, QPPM…TIAS, SPTI…TLED, APRN…IPPE, APEI…PVGS, PDGE…PDPA, PPTN…NYMT, and MVQN…TGPP. An N-linked (GlcNAc...) asparagine glycan is attached at N574. 6 N-linked (GlcNAc...) asparagine glycosylation sites follow: N945, N988, N1069, N1141, N1212, and N1330. The disordered stretch occupies residues 1355–1392; it reads LARSLSVSPSKKLKRKASEVGDDSQSASYHPKEKRARR. A helical membrane pass occupies residues 1498–1518; the sequence is WVGACIAFLVLFSIVGMLICW. Residues 1519-2200 lie on the Cytoplasmic side of the membrane; it reads WLRCNKKSAG…EYLAAYDNFS (682 aa). Tyrosine-protein phosphatase domains follow at residues 1647-1902 and 1933-2192; these read FQSE…VLDA and IDME…AYEY. Substrate-binding positions include D1811, 1843 to 1849, and Q1887; that span reads CSAGIGR. C1843 serves as the catalytic Phosphocysteine intermediate. C2133 acts as the Phosphocysteine intermediate in catalysis.

It belongs to the protein-tyrosine phosphatase family. Receptor class 2A subfamily. As to expression, both isoforms are ubiquitously expressed in early embryos. In later embryos, larvae and adults expression is highest in the nerve ring, dorsal cord, ventral cord and epithelial tissues.

It localises to the cell junction. The protein localises to the adherens junction. It is found in the cell membrane. The catalysed reaction is O-phospho-L-tyrosyl-[protein] + H2O = L-tyrosyl-[protein] + phosphate. In terms of biological role, has a role in early neural and epidermal development; neuroblast movements during closure of the gastrulation cleft and epidermal morphogenesis. Vab-1 and ptp-3 may function redundantly within the same sets of neuronal precursors. The sequence is that of Tyrosine-protein phosphatase Lar-like (ptp-3) from Caenorhabditis elegans.